An 89-amino-acid chain; its full sequence is Small ribosomal subunit protein uS17 (89 aa).

Belongs to the universal ribosomal protein uS17 family. In terms of assembly, part of the 30S ribosomal subunit.

Functionally, one of the primary rRNA binding proteins, it binds specifically to the 5'-end of 16S ribosomal RNA. This Acidovorax ebreus (strain TPSY) (Diaphorobacter sp. (strain TPSY)) protein is Small ribosomal subunit protein uS17.